The following is a 292-amino-acid chain: Leucine-rich repeat-containing protein 10B (292 aa).

The disordered stretch occupies residues 1-20; sequence MGIAESTPDELPSDAEEQLR. Over residues 7-16 the composition is skewed to acidic residues; that stretch reads TPDELPSDAE. LRR repeat units lie at residues 22–43, 45–66, 68–90, 91–112, 114–136, 137–158, 160–181, 183–204, and 205–226; these read GDQQ…VCAL, RLQK…IEEL, ELRI…CRLP, RLTR…FAQL, SLRC…LRLV, ALQS…LPRM, GLRG…LLRM, RLHI…HPLR, and ALRV…ADTV. Residues 236 to 261 are disordered; sequence RMAERDEPTPRPPPRRPARAFEDEEE.

The chain is Leucine-rich repeat-containing protein 10B (LRRC10B) from Homo sapiens (Human).